A 1006-amino-acid polypeptide reads, in one-letter code: Unconventional myosin-Id (1006 aa).

An N-acetylalanine modification is found at Ala2. Residues 9 to 695 (FGKADFVLMD…TLFTLEELRA (687 aa)) form the Myosin motor domain. An ATP-binding site is contributed by 102–109 (GESGAGKT). Ser200 is modified (phosphoserine). Tyr536 is subject to Phosphotyrosine. The tract at residues 572–594 (MIALVDNLASKEPYYVRCIKPND) is actin-binding. IQ domains follow at residues 699–719 (VRIVLFLQKVWRGTLARMRYK) and 721–741 (TKAALTIIRYYRRYKVKSYIH). The TH1 domain occupies 812 to 1005 (GQRADLGLQR…RSGFILSVPG (194 aa)).

Belongs to the TRAFAC class myosin-kinesin ATPase superfamily. Myosin family. Interacts (via the two IQ motifs) with calmodulin. Binds an additional calmodulin chain via a third, C-terminal region. Interacts with F-actin.

It is found in the cytoplasm. It localises to the perikaryon. Its subcellular location is the cell projection. The protein localises to the dendrite. The protein resides in the early endosome. It is found in the cell cortex. Unconventional myosin that functions as actin-based motor protein with ATPase activity. Plays a role in endosomal protein trafficking, and especially in the transfer of cargo proteins from early to recycling endosomes. Required for normal planar cell polarity in ciliated tracheal cells, for normal rotational polarity of cilia, and for coordinated, unidirectional ciliary movement in the trachea. Required for normal, polarized cilia organization in brain ependymal epithelial cells. The sequence is that of Unconventional myosin-Id (MYO1D) from Bos taurus (Bovine).